The sequence spans 212 residues: Phosphatidylserine decarboxylase proenzyme (212 aa).

Catalysis depends on Ser182, which acts as the Schiff-base intermediate with substrate; via pyruvic acid. Ser182 is subject to Pyruvic acid (Ser); by autocatalysis.

The protein belongs to the phosphatidylserine decarboxylase family. PSD-A subfamily. Heterodimer of a large membrane-associated beta subunit and a small pyruvoyl-containing alpha subunit. It depends on pyruvate as a cofactor. Is synthesized initially as an inactive proenzyme. Formation of the active enzyme involves a self-maturation process in which the active site pyruvoyl group is generated from an internal serine residue via an autocatalytic post-translational modification. Two non-identical subunits are generated from the proenzyme in this reaction, and the pyruvate is formed at the N-terminus of the alpha chain, which is derived from the carboxyl end of the proenzyme. The post-translation cleavage follows an unusual pathway, termed non-hydrolytic serinolysis, in which the side chain hydroxyl group of the serine supplies its oxygen atom to form the C-terminus of the beta chain, while the remainder of the serine residue undergoes an oxidative deamination to produce ammonia and the pyruvoyl prosthetic group on the alpha chain.

The protein localises to the cell membrane. It carries out the reaction a 1,2-diacyl-sn-glycero-3-phospho-L-serine + H(+) = a 1,2-diacyl-sn-glycero-3-phosphoethanolamine + CO2. The protein operates within phospholipid metabolism; phosphatidylethanolamine biosynthesis; phosphatidylethanolamine from CDP-diacylglycerol: step 2/2. Functionally, catalyzes the formation of phosphatidylethanolamine (PtdEtn) from phosphatidylserine (PtdSer). This chain is Phosphatidylserine decarboxylase proenzyme, found in Chlorobium limicola (strain DSM 245 / NBRC 103803 / 6330).